Reading from the N-terminus, the 626-residue chain is Lysine--tRNA ligase, cytoplasmic (626 aa).

At Met1 the chain carries N-acetylmethionine. 2 stretches are compositionally biased toward polar residues: residues 1–11 (MEGAADQTTKA) and 18–27 (DSSTTLNAAE). Residues 1-84 (MEGAADQTTK…QKAVAADDEE (84 aa)) are disordered. A coiled-coil region spans residues 37 to 69 (RSKNALKKEQKMKQKEEEKRRKDEEKAEKAKQA). A compositionally biased stretch (basic and acidic residues) spans 42–67 (LKKEQKMKQKEEEKRRKDEEKAEKAK). The segment covering 69–78 (APKASSQKAV) has biased composition (low complexity). Residues 141 to 217 (SLAGRIMSKR…RGELSIFPRS (77 aa)) constitute a DNA-binding region (OB). Residues Gly313 and Glu337 each contribute to the substrate site. ATP-binding positions include 359 to 361 (RNE) and 367 to 368 (HN). 2 residues coordinate substrate: Glu375 and Tyr377. Residues Glu521 and Glu528 each contribute to the Ca(2+) site. 528–529 (EL) is an ATP binding site. Positions 531 and 535 each coordinate substrate. 584-587 (GIDR) serves as a coordination point for ATP.

Belongs to the class-II aminoacyl-tRNA synthetase family. Ca(2+) is required as a cofactor.

The protein localises to the cytoplasm. It localises to the cytosol. It catalyses the reaction tRNA(Lys) + L-lysine + ATP = L-lysyl-tRNA(Lys) + AMP + diphosphate. In terms of biological role, catalyzes the specific attachment of an amino acid to its cognate tRNA in a 2 step reaction: the amino acid (AA) is first activated by ATP to form AA-AMP and then transferred to the acceptor end of the tRNA. Promotes aminoacylation of non-cognate tRNAs and translational recoding of lysine at nonsense codons. This is Lysine--tRNA ligase, cytoplasmic from Arabidopsis thaliana (Mouse-ear cress).